The primary structure comprises 318 residues: Phosphatidylglycerol--prolipoprotein diacylglyceryl transferase (318 aa).

Helical transmembrane passes span 24 to 44, 60 to 80, and 115 to 135; these read GPSTFSILMMIGFLTASYLLP, LLLLGILGTLVGAKIFFVFEI, and LFSGSGLVFYGGFLFGILFIT. Arg-164 contributes to the a 1,2-diacyl-sn-glycero-3-phospho-(1'-sn-glycerol) binding site. Transmembrane regions (helical) follow at residues 198–218 and 285–305; these read VPVWNTPLIESIISFLFFFYF and GFSQSQLVSIIIILVGAFFIL.

It belongs to the Lgt family.

It localises to the cell inner membrane. It carries out the reaction L-cysteinyl-[prolipoprotein] + a 1,2-diacyl-sn-glycero-3-phospho-(1'-sn-glycerol) = an S-1,2-diacyl-sn-glyceryl-L-cysteinyl-[prolipoprotein] + sn-glycerol 1-phosphate + H(+). It functions in the pathway protein modification; lipoprotein biosynthesis (diacylglyceryl transfer). Catalyzes the transfer of the diacylglyceryl group from phosphatidylglycerol to the sulfhydryl group of the N-terminal cysteine of a prolipoprotein, the first step in the formation of mature lipoproteins. The polypeptide is Phosphatidylglycerol--prolipoprotein diacylglyceryl transferase (Leptospira interrogans serogroup Icterohaemorrhagiae serovar copenhageni (strain Fiocruz L1-130)).